A 566-amino-acid polypeptide reads, in one-letter code: Malate synthase, glyoxysomal (566 aa).

The Proton acceptor role is filled by Arg182. The active-site Proton donor is Asp467. The Microbody targeting signal motif lies at 564-566; that stretch reads SRL.

It belongs to the malate synthase family.

The protein resides in the glyoxysome. The enzyme catalyses glyoxylate + acetyl-CoA + H2O = (S)-malate + CoA + H(+). It functions in the pathway carbohydrate metabolism; glyoxylate cycle; (S)-malate from isocitrate: step 2/2. The protein is Malate synthase, glyoxysomal of Cucurbita maxima (Pumpkin).